We begin with the raw amino-acid sequence, 37 residues long: Large ribosomal subunit protein bL36 (37 aa).

The protein belongs to the bacterial ribosomal protein bL36 family.

The protein is Large ribosomal subunit protein bL36 of Thermosynechococcus vestitus (strain NIES-2133 / IAM M-273 / BP-1).